The sequence spans 406 residues: S-adenosylmethionine synthase (406 aa).

ATP is bound at residue His16. Asp18 provides a ligand contact to Mg(2+). Glu44 lines the K(+) pocket. L-methionine-binding residues include Glu57 and Gln109. The segment at 109–119 is flexible loop; it reads QSPQIAQGVDE. ATP is bound by residues 174–176, 249–250, Asp258, 264–265, Ala281, and Lys285; these read DAK, RF, and RK. Asp258 contributes to the L-methionine binding site. Lys289 is a binding site for L-methionine.

It belongs to the AdoMet synthase family. Homotetramer; dimer of dimers. Requires Mg(2+) as cofactor. K(+) is required as a cofactor.

The protein localises to the cytoplasm. It carries out the reaction L-methionine + ATP + H2O = S-adenosyl-L-methionine + phosphate + diphosphate. It functions in the pathway amino-acid biosynthesis; S-adenosyl-L-methionine biosynthesis; S-adenosyl-L-methionine from L-methionine: step 1/1. Functionally, catalyzes the formation of S-adenosylmethionine (AdoMet) from methionine and ATP. The overall synthetic reaction is composed of two sequential steps, AdoMet formation and the subsequent tripolyphosphate hydrolysis which occurs prior to release of AdoMet from the enzyme. This is S-adenosylmethionine synthase from Sphingopyxis alaskensis (strain DSM 13593 / LMG 18877 / RB2256) (Sphingomonas alaskensis).